The sequence spans 406 residues: Acetate kinase (406 aa).

Asn7 contacts Mg(2+). Lys14 lines the ATP pocket. Arg90 is a substrate binding site. The active-site Proton donor/acceptor is the Asp147. ATP is bound by residues 207–211, 283–285, and 331–335; these read HLGNG, DMR, and GVGEN. Residue Glu385 coordinates Mg(2+).

This sequence belongs to the acetokinase family. Homodimer. The cofactor is Mg(2+). It depends on Mn(2+) as a cofactor.

The protein localises to the cytoplasm. The enzyme catalyses acetate + ATP = acetyl phosphate + ADP. It participates in metabolic intermediate biosynthesis; acetyl-CoA biosynthesis; acetyl-CoA from acetate: step 1/2. In terms of biological role, catalyzes the formation of acetyl phosphate from acetate and ATP. Can also catalyze the reverse reaction. The sequence is that of Acetate kinase from Thermosipho africanus (strain TCF52B).